The sequence spans 481 residues: MQITRDKWSKNFSEWFDWVLREGEFYDYGRYPVKGMGVWMPYGFKLRQNIISIIRNLLDSTGHEEVLFPLLIPEDLLRRESTHIKGFEEEVFWVTKGGSEDLDVKLALRPTSEVAITTMENLWLKSYKQLPKKYYQIVSVFRYETKATRPMIRLREITTFKEAHTVHETYDDAQRQVEEAIEIYKKIFNNLAIPYVLSERPEWDRFAGALHTYAFDTIMPDGKVMQIGTVHHLGQNFSRALDFKIQKKDGSLDYPHQTSYGISDRAIASVIAIHGDDHGPILPPSVAPIKVVVVPIPAKNEEGTQQVMKYSIEICEMLNKNNITCVTDQDTEKTPGEKFYIWEIKGVPIRLEIGPRELASSTVFIKRRDNLKSYTVKKEEVVNKVKEVLNEIQEDLRKRAWESLKSRIEYANDIEKAKNILENNSGIVDVPWCGSKECGLKIEELTNARVLGYPIEDRKVNDKCVICKMNAKTVLRVAKTY.

The protein belongs to the class-II aminoacyl-tRNA synthetase family. ProS type 3 subfamily. As to quaternary structure, homodimer.

It localises to the cytoplasm. The catalysed reaction is tRNA(Pro) + L-proline + ATP = L-prolyl-tRNA(Pro) + AMP + diphosphate. Its function is as follows. Catalyzes the attachment of proline to tRNA(Pro) in a two-step reaction: proline is first activated by ATP to form Pro-AMP and then transferred to the acceptor end of tRNA(Pro). This chain is Proline--tRNA ligase, found in Saccharolobus islandicus (strain Y.N.15.51 / Yellowstone #2) (Sulfolobus islandicus).